The primary structure comprises 364 residues: Melatonin receptor type 1B (364 aa).

Positions 1-28 (MPDNSSIANCCAASGLAARPSWPGSAEA) are cleaved as a signal peptide. Topologically, residues 29–45 (EPPETPRAPWVAPMLST) are extracellular. Residues 46–66 (VVIVTTAVDFVGNLLVILSVL) traverse the membrane as a helical segment. Residues 67 to 81 (RNRKLRNAGNLFVVN) are Cytoplasmic-facing. A helical transmembrane segment spans residues 82–102 (LALADLVVALYPYPLILVAIL). At 103–115 (HDGWVLGEIHCKA) the chain is on the extracellular side. A disulfide bridge connects residues cysteine 113 and cysteine 190. A helical transmembrane segment spans residues 116 to 136 (SAFVMGLSVIGSVFNITAIAI). At 137–158 (NRYWCICHSATYHRACSQWHAP) the chain is on the cytoplasmic side. A helical membrane pass occupies residues 159–179 (LYISLIWLLTLVALVPNFFVG). At 180-200 (SLEYDPRIYSCTFIQTASTQY) the chain is on the extracellular side. The chain crosses the membrane as a helical span at residues 201–221 (TMAVVAIHFLLPIAVVSFCYL). At 222 to 255 (RIWILVLQARRKAKAERKLRLRPSDLRSFLTMFA) the chain is on the cytoplasmic side. A helical membrane pass occupies residues 256-276 (VFVVFAICWAPLNCIGLAVAI). The Extracellular portion of the chain corresponds to 277–287 (NPEAMALQIPE). A helical membrane pass occupies residues 288–308 (GLFVTSYFLAYFNSCLNAIVY). Topologically, residues 309–364 (GLLNQNFRREYKRILSALWSTGRCFHDASKCHLTEDLQGPVPPAAMATIPVQEGAL) are cytoplasmic.

It belongs to the G-protein coupled receptor 1 family. In terms of tissue distribution, expressed in the hippocampus, kidney, and ovary.

Its subcellular location is the cell membrane. Functionally, high affinity receptor for melatonin. The activity of this receptor is mediated by pertussis toxin sensitive G proteins that inhibits adenylate cyclase activity. The sequence is that of Melatonin receptor type 1B from Rattus norvegicus (Rat).